The primary structure comprises 2009 residues: Protein Daple (2009 aa).

Residues 11 to 131 enclose the Calponin-homology (CH) domain; the sequence is LFLQSPLVTW…KVLLLVLGCA (121 aa). Residues 221-251 form a disordered region; it reads QTQQPPSPGKFSSPDSTPSPTSSLSSEDKQH. A phosphoserine mark is found at S227 and S239. The segment covering 232–245 has biased composition (low complexity); it reads SSPDSTPSPTSSLS. Coiled coils occupy residues 247–425 and 456–1008; these read EDKQ…QKQS and ELNE…TQEG. S486 bears the Phosphoserine mark. A disordered region spans residues 1002 to 1036; it reads LRQTQEGGDKAQNALKRPPGKVTSHQEKEAWEPSH. Residues 1025-1036 are compositionally biased toward basic and acidic residues; that stretch reads SHQEKEAWEPSH. Residues 1190–1384 adopt a coiled-coil conformation; that stretch reads HRNLELEHKE…LEEKIMDQYK (195 aa). Positions 1410–1419 are enriched in basic and acidic residues; the sequence is KEGSRERLKS. 2 disordered regions span residues 1410–1716 and 1757–1787; these read KEGS…GAKM and GMPS…HMPV. Positions 1430-1439 are enriched in low complexity; sequence PSDPASPSPS. Residue S1435 is modified to Phosphoserine. Residues 1440-1449 show a composition bias toward polar residues; sequence QALRSQTENP. Composition is skewed to low complexity over residues 1510–1524 and 1562–1581; these read TFST…SSST and NSLE…SLKG. S1592 is modified (phosphoserine). The GBA motif lies at 1652–1683; the sequence is HSASPSSEMVTLEEFLEESNRGGSPTHDTPSC. Residues 1681-1697 are compositionally biased toward basic and acidic residues; the sequence is PSCRDDLLSDYFRKAHD. Residues 1761-1783 are compositionally biased toward polar residues; that stretch reads RQVQPPQSLSLGRPRQTTMTQNC. At S1798 the chain carries Phosphoserine. Residues 1808 to 2009 form a disordered region; sequence SGPEACRPES…QTVWYEYGCV (202 aa). The span at 1866 to 1883 shows a compositional bias: basic and acidic residues; that stretch reads RPLDTRRFSLAPPKEERL. Over residues 1898 to 1911 the composition is skewed to polar residues; that stretch reads GCSSGSNPQIQHFS. Over residues 1943–1954 the composition is skewed to gly residues; it reads TSEGDGGPGHGY. Residues 1981 to 1991 show a composition bias toward polar residues; the sequence is SQGSSSKSTPA. The short motif at 2006–2009 is the PDZ-binding element; sequence YGCV. The tract at residues 2007-2009 is DVL1-binding; it reads GCV.

It belongs to the CCDC88 family. In terms of assembly, homooligomer. Interacts with DVL1 (via PDZ domain); dissociates following initiation of non-canonical Wnt signaling. Interacts (via C-terminus) with ligand-activated Wnt receptor FZD7; competes with DVL1 for binding to FZD7 and displaces DVL1 from ligand-activated FZD7. Interacts (via GBA motif) with guanine nucleotide-binding protein G(i) alpha subunits GNAI1, GNAI2 and GNAI3 (inactive GDP-bound form); interacts with higher affinity with GNAI1 and GNAI3 than with GNAI2 and interaction leads to G(i) alpha subunit activation. Does not interact with GNAO1.

It localises to the cytoplasm. It is found in the cell junction. Its function is as follows. Required for activation of guanine nucleotide-binding proteins (G-proteins) during non-canonical Wnt signaling. Binds to ligand-activated Wnt receptor FZD7, displacing DVL1 from the FZD7 receptor and leading to inhibition of canonical Wnt signaling. Acts as a non-receptor guanine nucleotide exchange factor by also binding to guanine nucleotide-binding protein G(i) alpha (Gi-alpha) subunits, leading to their activation. Binding to Gi-alpha subunits displaces the beta and gamma subunits from the heterotrimeric G-protein complex, triggering non-canonical Wnt responses such as activation of RAC1 and PI3K-AKT signaling. Promotes apical constriction of cells via ARHGEF18. This Mus musculus (Mouse) protein is Protein Daple (Ccdc88c).